The primary structure comprises 350 residues: Decarboxylase iboD (350 aa).

This sequence belongs to the phosphatidylserine decarboxylase family.

Its pathway is secondary metabolite biosynthesis. In terms of biological role, decarboxylase; part of the gene cluster that mediates the biosynthesis of the psychoactive metabolites ibotenic acid and muscimol. The first committed step is glutamate hydroxylation by the 2-oxoglutarate-dependent dioxygenase iboH, and the last step is decarboxylation of ibotenic acid to muscimol by the decarboxylase iboD. The order of the intermediate reactions is somewhat ambiguous. IboA likely activates the carboxylic acid at position 5 to introduce an amide bond, and the flavin monooxygenase iboF generates the N-O bond. There are several options for the latter step. One option is that iboF directly hydroxylates the amide nitrogen formed by iboA to produce a hydroxamic acid species. Another option is that iboF hydroxylates an external N-containing compound, whose resulting N-O bond is subsequently introduced into the hydroxyglutamate scaffold. The paralogous PLP-dependent cystathionine gamma-synthase-like enzymes iboG1 and iboG2 are likely involved in substitution of the OH group at position 3 by the O-N moiety. The first cyclic intermediate is most probably tricholomic acid which is likely desaturated to ibotenic acid by the cytochrome P450 monooxygenase iboC. The sequence is that of Decarboxylase iboD from Amanita muscaria (strain Koide BX008).